A 486-amino-acid chain; its full sequence is uncharacterized protein (486 aa).

A helical membrane pass occupies residues 18–38 (TLLQLFVFTVICVFVLSGLAI). Over residues 62–79 (DRQKQMEKQQDSGEKRSF) the composition is skewed to basic and acidic residues. Disordered stretches follow at residues 62–82 (DRQKQMEKQQDSGEKRSFEST) and 117–147 (IESSSSSDSSSSSSSSNAKNSQGGGQGGPQM). Low complexity predominate over residues 119–132 (SSSSSDSSSSSSSS). The next 3 helical transmembrane spans lie at 324–344 (VVYLVSVAGAVILGLIVMMSI), 365–385 (IGQFLTEILIVAVIAIGLASV), and 451–471 (MLILGGIGILIAIIATLLPSI).

Belongs to the ABC-4 integral membrane protein family.

The protein resides in the cell membrane. This is an uncharacterized protein from Bacillus subtilis (strain 168).